We begin with the raw amino-acid sequence, 473 residues long: DNA-binding protein (473 aa).

Disordered stretches follow at residues 1–69 (MAGR…GFSH) and 85–111 (RRLE…SKAV). Over residues 7–18 (ELPTITPYLQET) the composition is skewed to polar residues. The segment covering 53-62 (PDSEEEEEEV) has biased composition (acidic residues). Y141 is subject to Phosphotyrosine; by host. Positions 230 and 232 each coordinate Zn(2+). The tract at residues 243–277 (VEMDVASENAQRALKEHPSRAKVVQNRWGRSVVQL) is flexible loop. C285, C301, C342, C344, C396, and C412 together coordinate Zn(2+). Residues 459–473 (VALPASHGDGEKEPF) are C-terminal arm, DBP binding.

The protein belongs to the adenoviridae E2A DNA-binding protein family. Homomultimerizes on viral ssDNA bound to pTP. Forms a initiation complex with viral polymerase, pTP and hosts NFIA and POU2F1/OCT1. Interacts with host SRCAP.

The protein localises to the host nucleus. In terms of biological role, plays a role in the elongation phase of viral strand displacement replication by unwinding the template in an ATP-independent fashion, employing its capacity to form multimers. Also enhances the rate of initiation. Released from template upon second strand synthesis. Assembles in complex with viral pTP, viral pol, host NFIA and host POU2F1/OCT1 on viral origin of replication. Covers the whole ssDNA genome during synthesis. The complementary strand synthesis induces its relese from DNA template. May inhibit cellular transcription mediated by the interaction between host SRCAP and CBP. The polypeptide is DNA-binding protein (Homo sapiens (Human)).